Here is a 1347-residue protein sequence, read N- to C-terminus: BTB/POZ domain-containing protein 1 (1347 aa).

ANK repeat units follow at residues 51 to 81 (YGRTVLHIAVSENKNSFVRSLLQHKGIDVFV) and 86 to 115 (SGYTALHRAIYVGNLEAASLLLSKDPSFRS). RCC1 repeat units follow at residues 148 to 198 (GNEL…DKIL), 215 to 264 (SQNV…ALTK), 265 to 322 (FGSI…AWTD), and 324 to 372 (DIYS…CLLQ). 2 BTB domains span residues 619–698 (SDVT…LSPW) and 758–829 (MDTV…VELF). Disordered regions lie at residues 1006–1029 (SSNQSDSLNKEDAEEKSPKPNVVN), 1104–1139 (EKADASTTTVLSDSRFMKAPTKKSQREKKKELSKQV), 1193–1237 (EGSS…PLSI), and 1286–1347 (GILK…RAVK). The span at 1013–1023 (LNKEDAEEKSP) shows a compositional bias: basic and acidic residues. 2 stretches are compositionally biased toward polar residues: residues 1208–1237 (SNGSPTSWNLLTKPSPRSASLPKNSQPLSI) and 1297–1306 (NRKQGQASKQ). A compositionally biased stretch (basic residues) spans 1336–1347 (TTHKKGKARAVK).

Interacts with cul3.

It participates in protein modification; protein ubiquitination. Its function is as follows. Probable substrate-specific adapter of an E3 ubiquitin-protein ligase complex which mediates the ubiquitination and subsequent proteasomal degradation of target proteins. This Schizosaccharomyces pombe (strain 972 / ATCC 24843) (Fission yeast) protein is BTB/POZ domain-containing protein 1 (btb1).